The sequence spans 1901 residues: MDTQPAPVPHVLPQDVYEFPDDQESLGRLRVSEMPAELNGGGGGGSAAAFAMELPEQSNKKRKRCGVCVPCLRKEPCGACYNCVNRSTSHQICKMRKCEQLKKKRVVPMKGVENCSESILVDGPKTDQMEAGPVNHVQEGRLKQECDSTLPSKGCEDLANQLLMEANSWLSNTAAPQDPCNKLNWDKPTIPNHAANNNSNLEDAKNLVAFSAVAEAMSTYGMPASGTPSSVSLQLYEKFNYETNRDNSGHLEGNAPSCPEDLNTLKAALALAKHGVKPPNCNCDGPECPDYLEWLENKIKSTVKGSQESPFPNLGQVSKELVQKQYPKEQVLNLENKNSTCPSGNLPFSQNALSLAKEKNISLQTAIAIEALTQLSSALPQTNNECPNAPSQPLINPHDQLTHFPSAKGNQLPMLPVARNELFQNQQSQLYTGKNALPVPQSPRQTSWEQNKKSSYQEGQYIPENLSHSSSVLPSDASTPQKPEFLQQWVQNADLLKSPSDPMTGLKQLLGNTDEYIKSVFKGPEALPNKKNVKPKHTIKSIKKESTEFLKMSPDQQLSQLLQTNEFHRNTQAALQQHLHHKRNLFVDPNAMEACTQEQQNWWVPSSQQAPVSKTTEKPVKERKKRRQSPSQKQVEPKPKPQRKQVQIKKPKVKEGSAVFMPVSQISLDTFRRVEKEENQGKEMDAENSLPNNVQTELLESQSLQLTGSQANPDDRKTVNTQEMCNENQSNIGKANNFALCVNRANSFVAKDQCPTPSTHDTSSSSGQGDSANQHTNVSDVPGQNDLSCLDDKLEDLIRQFEAEFGEDFSLPGSAVPSQNGEGPPKQTPSGDPQFKLPFPSQLLPPENSTKPATHSNPALSNNPVSREVSNNLDSLFSSKSPKQIKIESSGAITVVSTTCFYSEENQHLDGTPTKSDLPFNPTLSGFLDSPLKYLTSPTKSLIDTPAKKAQAEFPTCDCVEQINEKDEGPYYTHLGSGPTVASIRELMEERFGQKGDAIRIEKVIYTGKEGKSSRGCPIAKWVIRRQSEDEKLMCLVRQRAGHHCENAVIIILIMAWEGIPRSLGDSLYNDITETITKYGNPTSRRCGLNDDRTCACQGKDPNTCGASFSFGCSWSMYFNGCKYARSKTPRKFRLIGENPKEEDGLKDNFQNLATKVAPVYKMLAPQAYQNQVNNEDIAIDCRLGLKEGRPFSGVTACMDFCAHAHKDQHNLYNGCTVVCTLTKEDNRMIGRVAEDEQLHVLPLYKVSTTDEFGSEEGQLEKIKKGGIHVLSSFPREVRKLSEPAKSCRQRQLEAKKAAAEKKKLQKEKLVSPDKTKQEPSDKKTCQQNPGVPQQQTKPCIKVEPSNHYNNFKYNGNGVVESYSVLGSCRPSDPYSMNSVYSYHSFYAQPNLPSVNGFHSKYALPPFGFYGFPNNPVVPNQFMNYGTSDARNSGWMNNCFEKKPELQSLADGMNQSYGSELSEQSFRRSSEVPHHYSLQNPSSQKSVNVPHRTTPAPVETTPYSNLPCYNKVIKKEPGSDPLVDSFQRANSVHSHSPGVNHSLQASDLPISYKANGALSSSGRTNAESPCSMFMPNDKNGLEKKDYFGVHSNAPGLKDKQWPPYGTDVSVRQHDSLDSQSPGKVWSSCKLSDSSAALPSSASTQDKNWNGRQVSLNQGMKESALFQEKLWNSVAASDRCSATPSDRSSITPCSELQDKNWGSFPNPTVNSLKTDSSQNHWDPYSLDDNMDDGQSKSVKEEDDEEIWSDSEHNFLDENIGGVAVAPGHGSILIECARRELHATTPLKKPNRCHPTRISLVFYQHKNLNQPNHGLALWEAKMKQLAERARAREEEAAKLGIKQEVKSLGKKRKWGGAATTETPPVEKKDYTPTRQAATILTDSATTSFSYAYTKVTGPYSRFI.

The CXXC-type zinc-finger motif lies at serine 58–glutamate 99. The Zn(2+) site is built by cysteine 65, cysteine 68, cysteine 71, cysteine 77, cysteine 80, cysteine 83, cysteine 93, and cysteine 98. Disordered stretches follow at residues lysine 434 to serine 455, tryptophan 602 to alanine 658, lysine 751 to leucine 787, and aspartate 808 to arginine 867. 2 stretches are compositionally biased toward polar residues: residues serine 442–serine 455 and tryptophan 602–lysine 614. Over residues lysine 640–lysine 652 the composition is skewed to basic residues. Over residues serine 758–serine 771 the composition is skewed to low complexity. Over residues glutamate 847–arginine 867 the composition is skewed to polar residues. Zn(2+)-binding residues include cysteine 957, cysteine 959, cysteine 1017, histidine 1043, and cysteine 1045. Arginine 1085 provides a ligand contact to 2-oxoglutarate. The Zn(2+) site is built by cysteine 1095, cysteine 1097, cysteine 1113, cysteine 1122, and cysteine 1182. Cysteine 1198 is a 2-oxoglutarate binding site. Residue histidine 1204 coordinates Zn(2+). Residues histidine 1206 and aspartate 1208 each coordinate Fe cation. Histidine 1240 contacts 2-oxoglutarate. 4 disordered regions span residues serine 1282 to lysine 1338, tyrosine 1457 to threonine 1501, serine 1591 to valine 1624, and serine 1680 to isoleucine 1745. Basic and acidic residues predominate over residues arginine 1291 to threonine 1325. The span at cysteine 1326–lysine 1338 shows a compositional bias: polar residues. Residues serine 1465–histidine 1474 show a composition bias toward basic and acidic residues. The span at serine 1477–valine 1487 shows a compositional bias: polar residues. Composition is skewed to polar residues over residues serine 1680 to serine 1693 and serine 1702 to histidine 1719. Residue histidine 1780 participates in Fe cation binding. Arginine 1795–serine 1797 contacts 2-oxoglutarate.

This sequence belongs to the TET family. The cofactor is Fe(2+). Zn(2+) serves as cofactor.

The protein localises to the nucleus. Its subcellular location is the chromosome. It carries out the reaction a 5-methyl-2'-deoxycytidine in DNA + 2-oxoglutarate + O2 = a 5-hydroxymethyl-2'-deoxycytidine in DNA + succinate + CO2. The catalysed reaction is a 5-hydroxymethyl-2'-deoxycytidine in DNA + 2-oxoglutarate + O2 = a 5-formyl-2'-deoxycytidine in DNA + succinate + CO2 + H2O. The enzyme catalyses a 5-formyl-2'-deoxycytidine in DNA + 2-oxoglutarate + O2 = a 5-carboxyl-2'-deoxycytidine in DNA + succinate + CO2 + H(+). Dioxygenase that catalyzes the conversion of the modified genomic base 5-methylcytosine (5mC) into 5-hydroxymethylcytosine (5hmC) and plays a key role in epigenetic chromatin reprogramming during embryonic development. Conversion of 5mC into 5hmC probably constitutes the first step in cytosine demethylation. Selectively binds to the promoter region of target genes and contributes to regulate the expression of numerous developmental genes, including pax6, rax, sox9 and six3. May also contribute to the regulation of target genes in ways that do not require its enzyme activity. The sequence is that of Methylcytosine dioxygenase tet3 from Xenopus tropicalis (Western clawed frog).